The following is a 564-amino-acid chain: Eukaryotic translation initiation factor 3 subunit L (564 aa).

The region spanning 331–537 (DAIRVFANIL…IHIADTKVAR (207 aa)) is the PCI domain.

The protein belongs to the eIF-3 subunit L family. As to quaternary structure, component of the eukaryotic translation initiation factor 3 (eIF-3) complex, which is composed of 13 subunits: EIF3A, EIF3B, EIF3C, EIF3D, EIF3E, EIF3F, EIF3G, EIF3H, EIF3I, EIF3J, EIF3K, EIF3L and EIF3M.

It is found in the cytoplasm. Component of the eukaryotic translation initiation factor 3 (eIF-3) complex, which is involved in protein synthesis of a specialized repertoire of mRNAs and, together with other initiation factors, stimulates binding of mRNA and methionyl-tRNAi to the 40S ribosome. The eIF-3 complex specifically targets and initiates translation of a subset of mRNAs involved in cell proliferation. The polypeptide is Eukaryotic translation initiation factor 3 subunit L (Gallus gallus (Chicken)).